The following is a 156-amino-acid chain: Small ribosomal subunit protein uS7 (156 aa).

The protein belongs to the universal ribosomal protein uS7 family. In terms of assembly, part of the 30S ribosomal subunit. Contacts proteins S9 and S11.

Functionally, one of the primary rRNA binding proteins, it binds directly to 16S rRNA where it nucleates assembly of the head domain of the 30S subunit. Is located at the subunit interface close to the decoding center, probably blocks exit of the E-site tRNA. This is Small ribosomal subunit protein uS7 from Leuconostoc mesenteroides subsp. mesenteroides (strain ATCC 8293 / DSM 20343 / BCRC 11652 / CCM 1803 / JCM 6124 / NCDO 523 / NBRC 100496 / NCIMB 8023 / NCTC 12954 / NRRL B-1118 / 37Y).